The primary structure comprises 916 residues: Oxysterol-binding protein 2 (916 aa).

3 disordered regions span residues M1–L20, T34–K121, and P139–G163. Positions E49–P58 are enriched in pro residues. Positions R79–P92 are enriched in low complexity. Residues E99–G113 show a composition bias toward polar residues. Residues L144–P155 are compositionally biased toward low complexity. Residues L182–A274 form the PH domain. Disordered regions lie at residues T282–E301 and F417–E448. S287 is subject to Phosphoserine. S763 is subject to Phosphoserine. The tract at residues E813–Q842 is disordered.

The protein belongs to the OSBP family. As to quaternary structure, interacts with CCDC159. In terms of tissue distribution, expressed mainly in retina, testis, and fetal liver.

It localises to the membrane. The protein resides in the cytoplasmic vesicle. Its subcellular location is the secretory vesicle. The protein localises to the acrosome. In terms of biological role, binds 7-ketocholesterol. Acts during spermatid development where its function is required prior to the removal of cytoplasm from the sperm head. The polypeptide is Oxysterol-binding protein 2 (OSBP2) (Homo sapiens (Human)).